The sequence spans 218 residues: Large ribosomal subunit protein uL4 (218 aa).

Residues 54–106 (GTHAVKNRGAVSGGGRKPWKQKGTGRARQGSIRAPQWYHGGVAHGPVPRDYSQ) form a disordered region.

This sequence belongs to the universal ribosomal protein uL4 family. In terms of assembly, part of the 50S ribosomal subunit.

Functionally, one of the primary rRNA binding proteins, this protein initially binds near the 5'-end of the 23S rRNA. It is important during the early stages of 50S assembly. It makes multiple contacts with different domains of the 23S rRNA in the assembled 50S subunit and ribosome. In terms of biological role, forms part of the polypeptide exit tunnel. In Bifidobacterium animalis subsp. lactis (strain AD011), this protein is Large ribosomal subunit protein uL4.